The following is a 362-amino-acid chain: MELSAVGERVFAAEALLKRRIRKGRMEYLVKWKGWSQKYSTWEPEENILDARLLAAFEEREREMELYGPKKRGPKPKTFLLKAQAKAKAKTYEFRSDSTRGIRIPYPGRSPQDLASTSRAREGLRNTGLPPPGSSTSTCRADPPRDRDRERDRGTSRVDDKPSSPGDSSKKRGPKPRKEPLDPSQRPLGEPSAGLGEYLKGRKLDETSSGTGKFPAGHSVIQLARRQDSDLVQYGVTSPSSAEASSKLAVDTFPARVIKHRAAFLEAKGQGALDPGGARVRHSSGTPASVGSLYRDMGAQGGRPSLIARIPVARILGDPEEESWSPSLTNLEKVVVTDVTSNFLTVTIKESNTDQGFFKEKR.

Residues 11–69 (FAAEALLKRRIRKGRMEYLVKWKGWSQKYSTWEPEENILDARLLAAFEEREREMELYGP) form the Chromo domain. Residues 90–100 (KTYEFRSDSTR) show a composition bias toward basic and acidic residues. The tract at residues 90–197 (KTYEFRSDST…LGEPSAGLGE (108 aa)) is disordered. Phosphoserine is present on Ser-110. Residues 142–162 (DPPRDRDRERDRGTSRVDDKP) are compositionally biased toward basic and acidic residues. Residues Ser-164 and Ser-229 each carry the phosphoserine modification. Tyr-234 is subject to Phosphotyrosine. A phosphoserine mark is found at Ser-238, Ser-284, Ser-305, and Ser-325.

As to quaternary structure, component of a PRC1-like complex. Interacts with RING1, RNF2, PCGF1, PCGF2, PCGF3, BMI1, PCGF5, PCGF6 and PHC2. Interacts with histone H3. Interacts with MLLT3. Interacts with PHC2. Interacts (via chromodomain) with single-stranded RNA.

The protein localises to the nucleus. It localises to the chromosome. Its function is as follows. Component of a Polycomb group (PcG) multiprotein PRC1-like complex, a complex class required to maintain the transcriptionally repressive state of many genes, including Hox genes, throughout development. PcG PRC1 complex acts via chromatin remodeling and modification of histones; it mediates monoubiquitination of histone H2A 'Lys-119', rendering chromatin heritably changed in its expressibility. This Mus musculus (Mouse) protein is Chromobox protein homolog 8 (Cbx8).